Reading from the N-terminus, the 97-residue chain is YcgL domain-containing protein Pmen_1774 (97 aa).

One can recognise a YcgL domain in the interval 3-87 (RICSIYKSPR…PEEDYIQHLP (85 aa)).

The protein is YcgL domain-containing protein Pmen_1774 of Ectopseudomonas mendocina (strain ymp) (Pseudomonas mendocina).